A 317-amino-acid chain; its full sequence is ATP synthase gamma chain (317 aa).

This sequence belongs to the ATPase gamma chain family. In terms of assembly, F-type ATPases have 2 components, CF(1) - the catalytic core - and CF(0) - the membrane proton channel. CF(1) has five subunits: alpha(3), beta(3), gamma(1), delta(1), epsilon(1). CF(0) has three main subunits: a, b and c.

It localises to the cellular thylakoid membrane. Functionally, produces ATP from ADP in the presence of a proton gradient across the membrane. The gamma chain is believed to be important in regulating ATPase activity and the flow of protons through the CF(0) complex. The sequence is that of ATP synthase gamma chain from Synechococcus sp. (strain CC9311).